The primary structure comprises 238 residues: DNA damage-regulated autophagy modulator protein 1 (238 aa).

The next 6 membrane-spanning stretches (helical) occupy residues 9 to 29, 53 to 73, 91 to 111, 116 to 136, 161 to 181, and 200 to 220; these read AFVPFLLVTWSSAAFIISYVV, SGIFGFMINFSAFLGAATMYT, VFNLVSLALGLVGCIGMGIVA, LAVPVVHDGGALLAFVCGVVY, MAISAVSCAAVVPMIACASLI, and VSAICEWTVAFGFIFYFLTFI.

This sequence belongs to the DRAM/TMEM150 family.

Its subcellular location is the lysosome membrane. In terms of biological role, lysosomal modulator of autophagy that plays a central role in p53/TP53-mediated apoptosis. Not involved in p73/TP73-mediated autophagy. In Mus musculus (Mouse), this protein is DNA damage-regulated autophagy modulator protein 1 (Dram1).